The primary structure comprises 292 residues: MFDFASYHRAATLADAINLLADNPQAKLLAGGTDVLIQLHHHNDRYRHIVDIHNLAELRGITLAEDGSLRIGSATTFTQLIEDPITQRHLPALCAAATSIAGPQIRNVATYGGNICNGATSADSATPTLIYDAKLEIHSPRGVRFVPINGFHTGPGKVSLEHDEILVAFHFPPQPKEHAGSAHFKYAMRDAMDISTIGCAAHCRLDNGNFSELRLAFGVAAPTPIRCQHAEQTAQNAPLNLQTLEAISESVLQDVAPRSSWRASKEFRLHLIQTMTKKVISEAVAAAGGKLQ.

Residues 1–176 enclose the FAD-binding PCMH-type domain; sequence MFDFASYHRA…VAFHFPPQPK (176 aa). Residues 27-34, 109-113, I165, and F184 contribute to the FAD site; these read KLLAGGTD and ATYGG.

As to quaternary structure, heterotrimer of XdhA, XdhB and XdhC. FAD serves as cofactor.

The catalysed reaction is xanthine + NAD(+) + H2O = urate + NADH + H(+). It catalyses the reaction hypoxanthine + NAD(+) + H2O = xanthine + NADH + H(+). The protein operates within purine metabolism; hypoxanthine degradation; urate from hypoxanthine: step 1/2. It participates in purine metabolism; hypoxanthine degradation; urate from hypoxanthine: step 2/2. Functionally, presumed to be a dehydrogenase, but possibly an oxidase. Participates in limited purine salvage (requires aspartate) but does not support aerobic growth on purines as the sole carbon source (purine catabolism). The sequence is that of Putative xanthine dehydrogenase FAD-binding subunit XdhB (xdhB) from Escherichia coli (strain K12).